Consider the following 528-residue polypeptide: G patch domain-containing protein 2 (528 aa).

Positions 36 to 119 (LEESSEQARG…NKKDHSDSDD (84 aa)) are disordered. Residues 63-77 (RQARKRRGRKRRSYN) are compositionally biased toward basic residues. Basic and acidic residues predominate over residues 98–117 (EPSKDYRENHNNNKKDHSDS). Phosphoserine occurs at positions 115, 117, 146, and 195. Disordered stretches follow at residues 232-282 (SEET…GDDE) and 487-528 (GRDG…GKSA). Over residues 239–252 (NKDKMECEEQKVSD) the composition is skewed to basic and acidic residues. The G-patch domain occupies 467 to 513 (ENNIGNRMLQNMGWTPGSGLGRDGKGISEPIQAMQRPKGLGLGFPLP). Residues 514–528 (KSTSATTTPNAGKSA) show a composition bias toward polar residues.

As to quaternary structure, interacts with DHX15. In terms of tissue distribution, testis.

The protein localises to the nucleus speckle. It is found in the nucleus. The protein resides in the nucleolus. Enhances the ATPase activity of DHX15 in vitro. In Homo sapiens (Human), this protein is G patch domain-containing protein 2 (GPATCH2).